The sequence spans 463 residues: Glucagon-like peptide 1 receptor (463 aa).

Residues 1 to 21 (MAVTPSLLRLALLLLGAVGRA) form the signal peptide. Over 22–139 (GPRPQGATVS…KQGERNSPEE (118 aa)) the chain is Extracellular. Disulfide bonds link C46–C71, C62–C104, and C85–C126. N63, N82, and N115 each carry an N-linked (GlcNAc...) asparagine glycan. A helical transmembrane segment spans residues 140 to 164 (QLLSLYIIYTVGYALSFSALVIASA). The Cytoplasmic segment spans residues 165–175 (ILVSFRHLHCT). Residues 176–201 (RNYIHLNLFASFILRALSVFIKDAAL) form a helical membrane-spanning segment. Over 202 to 227 (KWMYSTAAQQHQWDGLLSYQDSLGCR) the chain is Extracellular. C226 and C296 are disulfide-bonded. The helical transmembrane segment at 228–251 (LVFLLMQYCVAANYYWLLVEGVYL) threads the bilayer. The Cytoplasmic segment spans residues 252 to 265 (YTLLAFSVFSEQRI). The chain crosses the membrane as a helical span at residues 266-290 (FKLYLSIGWGVPLLFVIPWGIVKYL). Topologically, residues 291-305 (YEDEGCWTRNSNMNY) are extracellular. The chain crosses the membrane as a helical span at residues 306–328 (WLIIRLPILFAIGVNFLVFIRVI). The Cytoplasmic segment spans residues 329-348 (CIVIAKLKANLMCKTDIKCR). The residue at position 341 (C341) is an ADP-ribosylcysteine. An ADP-ribosylarginine modification is found at R348. The helical transmembrane segment at 349–370 (LAKSTLTLIPLLGTHEVIFAFV) threads the bilayer. Residues 352-355 (STLT) are important for allosteric inhibitor binding. The Extracellular segment spans residues 371–383 (MDEHARGTLRFVK). A helical membrane pass occupies residues 384-404 (LFTELSFTSFQGFMVAVLYCF). The Cytoplasmic portion of the chain corresponds to 405–463 (VNNEVQMEFRKSWERWRLERLNIQRDSSMKPLKCPTSSVSSGATVGSSVYAATCQNSCS).

It belongs to the G-protein coupled receptor 2 family. As to quaternary structure, may form homodimers and heterodimers with GIPR. Post-translationally, N-glycosylation enhances cell surface expression and lengthens receptor half-life by preventing degradation in the ER. As to expression, pancreatic islets, stomach, lung, rat insulinoma cell line.

It is found in the cell membrane. Its function is as follows. G-protein coupled receptor for glucagon-like peptide 1 (GLP-1). Ligand binding triggers activation of a signaling cascade that leads to the activation of adenylyl cyclase and increased intracellular cAMP levels. Plays a role in regulating insulin secretion in response to GLP-1. This Rattus norvegicus (Rat) protein is Glucagon-like peptide 1 receptor (Glp1r).